Consider the following 315-residue polypeptide: Transcription factor MafAa (315 aa).

Over residues 52-104 the composition is skewed to low complexity; sequence STPISTPCSSVPSSPSFCAPSPGSQPGQNLVNGVNNNNNNSGNGNNNTQGSSG. Disordered regions lie at residues 52–108 and 169–191; these read STPI…KPQM and ATNGHHHPVHHHHHHHGHHAHAR. A compositionally biased stretch (basic residues) spans 172-189; the sequence is GHHHPVHHHHHHHGHHAH. The interval 223-248 is basic motif; the sequence is RLKQKRRTLKNRGYAQSCRYKRVQQR. One can recognise a bZIP domain in the interval 223 to 286; that stretch reads RLKQKRRTLK…DLYKEKYEKL (64 aa). An interaction with DNA region spans residues 229 to 243; that stretch reads RTLKNRGYAQSCRYK. The segment at 251–272 is leucine-zipper; it reads LESEKCTLQSQVEQLKQDVARL. The disordered stretch occupies residues 290–315; that stretch reads AFNGGGNTRDPSSGNHVKTTSTDFFM. Polar residues predominate over residues 298–315; the sequence is RDPSSGNHVKTTSTDFFM.

It belongs to the bZIP family. Maf subfamily.

The protein localises to the nucleus. Functionally, transcription factor, possibly involved in transcription regulation during lens development, including that of crystallin genes. Specifically binds to the alphaCE2 enhancer element of crystallin gene. The chain is Transcription factor MafAa (mafaa) from Danio rerio (Zebrafish).